A 574-amino-acid chain; its full sequence is Proline--tRNA ligase (574 aa).

Belongs to the class-II aminoacyl-tRNA synthetase family. ProS type 1 subfamily. Homodimer.

Its subcellular location is the cytoplasm. It catalyses the reaction tRNA(Pro) + L-proline + ATP = L-prolyl-tRNA(Pro) + AMP + diphosphate. Functionally, catalyzes the attachment of proline to tRNA(Pro) in a two-step reaction: proline is first activated by ATP to form Pro-AMP and then transferred to the acceptor end of tRNA(Pro). As ProRS can inadvertently accommodate and process non-cognate amino acids such as alanine and cysteine, to avoid such errors it has two additional distinct editing activities against alanine. One activity is designated as 'pretransfer' editing and involves the tRNA(Pro)-independent hydrolysis of activated Ala-AMP. The other activity is designated 'posttransfer' editing and involves deacylation of mischarged Ala-tRNA(Pro). The misacylated Cys-tRNA(Pro) is not edited by ProRS. The protein is Proline--tRNA ligase of Oleidesulfovibrio alaskensis (strain ATCC BAA-1058 / DSM 17464 / G20) (Desulfovibrio alaskensis).